A 367-amino-acid polypeptide reads, in one-letter code: Multifunctional tryptophan biosynthesis protein (367 aa).

Positions 7–201 constitute a Glutamine amidotransferase type-1 domain; sequence NVVMIDNYDS…LNVSGGYWEE (195 aa). Residue 58–60 participates in L-glutamine binding; that stretch reads GPG. The active-site Nucleophile; for GATase activity is the Cys86. L-glutamine is bound by residues Gln90 and 136–137; that span reads SL. Active-site for GATase activity residues include His175 and Glu177. The tract at residues 209-367 is indole-3-glycerol phosphate synthase; the sequence is RKESILEKIY…TVLLIVKMLS (159 aa).

As to quaternary structure, tetramer of two components I and two components II.

The enzyme catalyses chorismate + L-glutamine = anthranilate + pyruvate + L-glutamate + H(+). It catalyses the reaction 1-(2-carboxyphenylamino)-1-deoxy-D-ribulose 5-phosphate + H(+) = (1S,2R)-1-C-(indol-3-yl)glycerol 3-phosphate + CO2 + H2O. Its pathway is amino-acid biosynthesis; L-tryptophan biosynthesis; L-tryptophan from chorismate: step 1/5. It functions in the pathway amino-acid biosynthesis; L-tryptophan biosynthesis; L-tryptophan from chorismate: step 4/5. The polypeptide is Multifunctional tryptophan biosynthesis protein (Pichia angusta (Yeast)).